Here is a 313-residue protein sequence, read N- to C-terminus: Probable lysophospholipase L2 (313 aa).

It localises to the cell inner membrane. The enzyme catalyses a 1-acyl-sn-glycero-3-phosphocholine + H2O = sn-glycerol 3-phosphocholine + a fatty acid + H(+). The polypeptide is Probable lysophospholipase L2 (pldB) (Haemophilus influenzae (strain ATCC 51907 / DSM 11121 / KW20 / Rd)).